Consider the following 750-residue polypeptide: GTP pyrophosphokinase rsh (750 aa).

Positions 45 to 144 (YFSHPLEVAA…VKLADRLHNM (100 aa)) constitute an HD domain. The 62-residue stretch at 390 to 451 (DQVFCFTPKG…KNGDEVDIIR (62 aa)) folds into the TGS domain. Positions 587–613 (AAKVDPAATTPKPGKRALPIRGTNPDL) are disordered. One can recognise an ACT domain in the interval 676–750 (RISVSAINSP…SVSSAKRVNG (75 aa)).

This sequence belongs to the RelA/SpoT family.

It catalyses the reaction GTP + ATP = guanosine 3'-diphosphate 5'-triphosphate + AMP. Its function is as follows. Functions as a (p)ppGpp synthase. In eubacteria ppGpp (guanosine 3'-diphosphate 5'-diphosphate) is a mediator of the stringent response that coordinates a variety of cellular activities in response to changes in nutritional abundance. It is necessary for persistence in mice, essential for intracellular growth of Brucella and required for expression of the type IV secretion system VirB and therefore plays a role in adaptation of Brucella to its intracellular host environment. The polypeptide is GTP pyrophosphokinase rsh (rsh) (Brucella melitensis biotype 1 (strain ATCC 23456 / CCUG 17765 / NCTC 10094 / 16M)).